A 196-amino-acid chain; its full sequence is Large ribosomal subunit protein bL9 (196 aa).

The segment at 172–196 is disordered; sequence NESARPEAFFDPEAEIEQEEGEENA. The span at 181–196 shows a compositional bias: acidic residues; sequence FDPEAEIEQEEGEENA.

The protein belongs to the bacterial ribosomal protein bL9 family.

Its function is as follows. Binds to the 23S rRNA. This is Large ribosomal subunit protein bL9 from Chelativorans sp. (strain BNC1).